The sequence spans 435 residues: MGPLSAPPCTQHITWKGLLLTASLLNFWNLPTTAQVIIEAKPPKVSEGKDVLLLVHNLPQNLTGYIWYKGQMTDLYHYITSYVVHGQIIYGPAYSGRETVYSNASLLIQNVTQEDAGSYTLHIIKRGDGTGGVTGYFTVTLYSETPKPSISSSNLNPREVMEAVRLICDPETPDASYLWLLNGQNLPMTHRLQLSKTNRTLYLFGVTKYIAGPYECEIRNPVSASRSDPVTLNLLPKLPMPYITINNLNPREKKDVLAFTCEPKSRNYTYIWWLNGQSLPVSPRVKRPIENRILILPSVTRNETGPYQCEIRDRYGGIRSNPVTLNVLYGPDLPRIYPSFTYYRSGENLDLSCFADSNPPAEYSWTINGKFQLSGQKLFIPQITTNHSGLYACSVRNSATGKEISKSMIVKVSETASPQVTYAGPNTWFQEILLL.

The first 34 residues, 1–34, serve as a signal peptide directing secretion; sequence MGPLSAPPCTQHITWKGLLLTASLLNFWNLPTTA. An Ig-like V-type domain is found at 35 to 143; sequence QVIIEAKPPK…TGYFTVTLYS (109 aa). Asparagine 61, asparagine 103, and asparagine 110 each carry an N-linked (GlcNAc...) asparagine glycan. The short motif at 126-128 is the Cell attachment site element; the sequence is RGD. 3 consecutive Ig-like C2-type domains span residues 148–233, 241–326, and 334–405; these read PSIS…VTLN, PYIT…VTLN, and PRIY…KEIS. Intrachain disulfides connect cysteine 168–cysteine 216, cysteine 261–cysteine 309, and cysteine 353–cysteine 393. N-linked (GlcNAc...) asparagine glycans are attached at residues asparagine 198, asparagine 267, asparagine 302, and asparagine 386.

This sequence belongs to the immunoglobulin superfamily. CEA family.

Its subcellular location is the secreted. This chain is Pregnancy-specific beta-1-glycoprotein 6 (PSG6), found in Homo sapiens (Human).